Consider the following 435-residue polypeptide: Methylenetetrahydrofolate--tRNA-(uracil-5-)-methyltransferase TrmFO (435 aa).

9-14 serves as a coordination point for FAD; the sequence is GAGLAG.

The protein belongs to the MnmG family. TrmFO subfamily. The cofactor is FAD.

It localises to the cytoplasm. The enzyme catalyses uridine(54) in tRNA + (6R)-5,10-methylene-5,6,7,8-tetrahydrofolate + NADH + H(+) = 5-methyluridine(54) in tRNA + (6S)-5,6,7,8-tetrahydrofolate + NAD(+). It carries out the reaction uridine(54) in tRNA + (6R)-5,10-methylene-5,6,7,8-tetrahydrofolate + NADPH + H(+) = 5-methyluridine(54) in tRNA + (6S)-5,6,7,8-tetrahydrofolate + NADP(+). In terms of biological role, catalyzes the folate-dependent formation of 5-methyl-uridine at position 54 (M-5-U54) in all tRNAs. In Staphylococcus epidermidis (strain ATCC 35984 / DSM 28319 / BCRC 17069 / CCUG 31568 / BM 3577 / RP62A), this protein is Methylenetetrahydrofolate--tRNA-(uracil-5-)-methyltransferase TrmFO.